Consider the following 198-residue polypeptide: Translation initiation factor IF-3 (198 aa).

Residues 168–198 form a disordered region; sequence SLAPKKAGSPKKAETDTAKKENPKKAVETKE. The span at 178–198 shows a compositional bias: basic and acidic residues; it reads KKAETDTAKKENPKKAVETKE.

This sequence belongs to the IF-3 family. In terms of assembly, monomer.

It is found in the cytoplasm. IF-3 binds to the 30S ribosomal subunit and shifts the equilibrium between 70S ribosomes and their 50S and 30S subunits in favor of the free subunits, thus enhancing the availability of 30S subunits on which protein synthesis initiation begins. This is Translation initiation factor IF-3 from Phocaeicola vulgatus (strain ATCC 8482 / DSM 1447 / JCM 5826 / CCUG 4940 / NBRC 14291 / NCTC 11154) (Bacteroides vulgatus).